The following is a 65-amino-acid chain: Large ribosomal subunit protein bL35 (65 aa).

A compositionally biased stretch (basic residues) spans methionine 1–glutamine 15. The tract at residues methionine 1–alanine 27 is disordered.

Belongs to the bacterial ribosomal protein bL35 family.

The chain is Large ribosomal subunit protein bL35 from Bordetella petrii (strain ATCC BAA-461 / DSM 12804 / CCUG 43448).